We begin with the raw amino-acid sequence, 212 residues long: Imidazole glycerol phosphate synthase subunit HisH (212 aa).

The Glutamine amidotransferase type-1 domain maps to 2–212 (KVAVIDYGMG…KNFLAWDGNV (211 aa)). Cys82 acts as the Nucleophile in catalysis. Catalysis depends on residues His190 and Glu192.

In terms of assembly, heterodimer of HisH and HisF.

It localises to the cytoplasm. The enzyme catalyses 5-[(5-phospho-1-deoxy-D-ribulos-1-ylimino)methylamino]-1-(5-phospho-beta-D-ribosyl)imidazole-4-carboxamide + L-glutamine = D-erythro-1-(imidazol-4-yl)glycerol 3-phosphate + 5-amino-1-(5-phospho-beta-D-ribosyl)imidazole-4-carboxamide + L-glutamate + H(+). It carries out the reaction L-glutamine + H2O = L-glutamate + NH4(+). It participates in amino-acid biosynthesis; L-histidine biosynthesis; L-histidine from 5-phospho-alpha-D-ribose 1-diphosphate: step 5/9. IGPS catalyzes the conversion of PRFAR and glutamine to IGP, AICAR and glutamate. The HisH subunit catalyzes the hydrolysis of glutamine to glutamate and ammonia as part of the synthesis of IGP and AICAR. The resulting ammonia molecule is channeled to the active site of HisF. This is Imidazole glycerol phosphate synthase subunit HisH from Chromobacterium violaceum (strain ATCC 12472 / DSM 30191 / JCM 1249 / CCUG 213 / NBRC 12614 / NCIMB 9131 / NCTC 9757 / MK).